An 81-amino-acid chain; its full sequence is Cytotoxin 5 (81 aa).

The first 21 residues, 1-21 (MKTLLLTLVVVTIVCLDLGYT), serve as a signal peptide directing secretion. Disulfide bonds link cysteine 24–cysteine 42, cysteine 35–cysteine 59, cysteine 63–cysteine 74, and cysteine 75–cysteine 80.

This sequence belongs to the three-finger toxin family. Short-chain subfamily. Type IA cytotoxin sub-subfamily. Monomer in solution; Homodimer and oligomer in the presence of negatively charged lipids forming a pore with a size ranging between 20 and 30 Angstroms. Expressed by the venom gland.

Its subcellular location is the secreted. The protein localises to the target cell membrane. Its function is as follows. Shows cytolytic activity on many different cells by forming pore in lipid membranes. In vivo, increases heart rate or kills the animal by cardiac arrest. In addition, it binds to heparin with high affinity, interacts with Kv channel-interacting protein 1 (KCNIP1) in a calcium-independent manner, and binds to integrin alpha-V/beta-3 (ITGAV/ITGB3) with moderate affinity. The sequence is that of Cytotoxin 5 from Naja atra (Chinese cobra).